A 329-amino-acid chain; its full sequence is GTP 3',8-cyclase (329 aa).

The Radical SAM core domain maps to 8–234; sequence AFARKFYYLR…QLRQRSDGPA (227 aa). GTP is bound at residue Arg-17. Residues Cys-24 and Cys-28 each coordinate [4Fe-4S] cluster. Residue Tyr-30 coordinates S-adenosyl-L-methionine. Cys-31 is a binding site for [4Fe-4S] cluster. Arg-68 is a binding site for GTP. Gly-72 is an S-adenosyl-L-methionine binding site. Position 99 (Thr-99) interacts with GTP. S-adenosyl-L-methionine is bound at residue Ser-123. Lys-160 lines the GTP pocket. Met-194 lines the S-adenosyl-L-methionine pocket. The [4Fe-4S] cluster site is built by Cys-257 and Cys-260. Residue 262–264 participates in GTP binding; that stretch reads RLR. Residue Cys-274 coordinates [4Fe-4S] cluster.

It belongs to the radical SAM superfamily. MoaA family. In terms of assembly, monomer and homodimer. [4Fe-4S] cluster is required as a cofactor.

The enzyme catalyses GTP + AH2 + S-adenosyl-L-methionine = (8S)-3',8-cyclo-7,8-dihydroguanosine 5'-triphosphate + 5'-deoxyadenosine + L-methionine + A + H(+). Its pathway is cofactor biosynthesis; molybdopterin biosynthesis. Its function is as follows. Catalyzes the cyclization of GTP to (8S)-3',8-cyclo-7,8-dihydroguanosine 5'-triphosphate. This Shigella sonnei (strain Ss046) protein is GTP 3',8-cyclase.